We begin with the raw amino-acid sequence, 244 residues long: Recombination directionality factor (244 aa).

Residues 1 to 34 (MAKRSIWAGDEDNKPKKRETYADDTVGRFHSGYS) form a disordered region. A compositionally biased stretch (basic and acidic residues) spans 11 to 27 (EDNKPKKRETYADDTVG).

Interacts with the integrase.

Its function is as follows. Recombination directionality factor that interacts directly with the integrase tetramer to activate excision and inhibit integration. This chain is Recombination directionality factor, found in Streptomyces coelicolor (Bacteriophage phi-C31).